A 147-amino-acid chain; its full sequence is Chorion class B protein B.L1 (147 aa).

Positions 1–38 are left arm; that stretch reads IGCGRGCGGRGYGGLGYGGLGYGGLGYGGLGGGCGRGF. A run of 4 repeats spans residues 11–15, 16–20, 21–25, and 26–30. The segment at 11-30 is 4 X 5 AA tandem repeats of G-Y-G-G-L; that stretch reads GYGGLGYGGLGYGGLGYGGL. A central domain region spans residues 39–107; that stretch reads SGGGLPVATA…GNGAVGITRE (69 aa). The segment at 108–147 is right arm (Gly-rich tandem repeats); that stretch reads GGLGYGAGYGGGYGLGYGGYGGGYGLGYGGYGGCGCGCGY.

It belongs to the chorion protein family.

Functionally, this protein is one of many from the eggshell of the silk moth. This Bombyx mori (Silk moth) protein is Chorion class B protein B.L1.